Reading from the N-terminus, the 360-residue chain is Mannose-1-phosphate guanylyltransferase catalytic subunit beta (360 aa).

The interval 2-222 is substrate-binding domain; sequence KALILVGGYG…QGFWMDIGQP (221 aa). Residue Asp110 coordinates GDP-alpha-D-mannose. Mg(2+) is bound at residue Asp110. Residue Lys162 is part of the active site. Asp218 contributes to the GDP-alpha-D-mannose binding site. The hexapeptide repeat domain stretch occupies residues 245–360; the sequence is YSGPGIVGNV…ESVPEPRIIM (116 aa).

Belongs to the transferase hexapeptide repeat family. In terms of assembly, component of the GMPPA-GMPPB mannose-1-phosphate guanylyltransferase complex composed of 4 GMPPA subunits and 8 GMPPB subunits; the complex is organized into three layers, a central layer made up of 2 GMPPA dimers sandwiched between two layers each made up of 2 GMPPB dimers. GMPPB catalytic activity is reduced when part of the complex and binding of GDP-alpha-D-Mannose by GMPPA induces allosteric feedback inhibition of GMPPB. Mg(2+) serves as cofactor.

It is found in the cytoplasm. It catalyses the reaction alpha-D-mannose 1-phosphate + GTP + H(+) = GDP-alpha-D-mannose + diphosphate. It participates in nucleotide-sugar biosynthesis; GDP-alpha-D-mannose biosynthesis; GDP-alpha-D-mannose from alpha-D-mannose 1-phosphate (GTP route): step 1/1. Its activity is regulated as follows. Enzyme activity is reduced by incorporation into the GMPPA-GMPPB mannose-1-phosphate guanylyltransferase complex. Allosterically inhibited, when part of the GMPPA-GMPPB complex, by GDP-alpha-D-mannose binding to GMPPA. Catalytic subunit of the GMPPA-GMPPB mannose-1-phosphate guanylyltransferase complex. Catalyzes the formation of GDP-mannose, an essential precursor of glycan moieties of glycoproteins and glycolipids. Can catalyze the reverse reaction in vitro. Together with GMPPA regulates GDP-alpha-D-mannose levels. The chain is Mannose-1-phosphate guanylyltransferase catalytic subunit beta from Mus musculus (Mouse).